The sequence spans 329 residues: Terpene synthase 7 (329 aa).

Residues 99–104 (DDLYLE) carry the DDxx(x)D/E motif motif. An NDxxSxxxD/E motif motif is present at residues 230–238 (NDIHSFNKE).

This sequence belongs to the terpene synthase family.

Terpene synthase that converts its substrate farnesyl diphosphate (FPP) into 6 yet unidentified sesquiterpenes. The polypeptide is Terpene synthase 7 (Dictyostelium purpureum (Slime mold)).